Here is a 579-residue protein sequence, read N- to C-terminus: Trehalase (579 aa).

An N-terminal signal peptide occupies residues 1–15 (MRLFLLLVGLTTVIA). 2 N-linked (GlcNAc...) asparagine glycosylation sites follow: Asn-29 and Asn-58. Residues Arg-161, 168–169 (WD), Asn-205, 214–216 (RSQ), 279–281 (RPE), and Gly-313 contribute to the substrate site. Asn-205 is a glycosylation site (N-linked (GlcNAc...) asparagine). The active-site Proton donor/acceptor is Asp-315. A glycan (N-linked (GlcNAc...) asparagine) is linked at Asn-331. Glu-513 serves as the catalytic Proton donor/acceptor. Glu-528 contacts substrate. A compositionally biased stretch (polar residues) spans 560-569 (DASANNGQSN). Residues 560 to 579 (DASANNGQSNEESETDSKEK) are disordered.

Belongs to the glycosyl hydrolase 37 family. As to expression, in midgut and Malpighian tubules.

It localises to the basolateral cell membrane. It carries out the reaction alpha,alpha-trehalose + H2O = alpha-D-glucose + beta-D-glucose. Its function is as follows. Involved in uptake of hemolymph trehalose into epithelial cells in the midgut of feeding larvae. The chain is Trehalase from Bombyx mori (Silk moth).